Consider the following 115-residue polypeptide: Prefoldin subunit beta (115 aa).

Belongs to the prefoldin subunit beta family. As to quaternary structure, heterohexamer of two alpha and four beta subunits.

It localises to the cytoplasm. Its function is as follows. Molecular chaperone capable of stabilizing a range of proteins. Seems to fulfill an ATP-independent, HSP70-like function in archaeal de novo protein folding. In Methanococcus aeolicus (strain ATCC BAA-1280 / DSM 17508 / OCM 812 / Nankai-3), this protein is Prefoldin subunit beta.